The sequence spans 652 residues: Acetyl-coenzyme A synthetase (652 aa).

CoA contacts are provided by residues 189–192 (RGGK), Thr-311, and Asn-335. ATP-binding positions include 387-389 (GEP), 411-416 (DTWWQT), Asp-500, and Arg-515. Ser-523 is a CoA binding site. Arg-526 lines the ATP pocket. Mg(2+) contacts are provided by Val-537, His-539, and Val-542. Residue Arg-584 participates in CoA binding. Lys-609 is modified (N6-acetyllysine).

This sequence belongs to the ATP-dependent AMP-binding enzyme family. It depends on Mg(2+) as a cofactor. Acetylated. Deacetylation by the SIR2-homolog deacetylase activates the enzyme.

It catalyses the reaction acetate + ATP + CoA = acetyl-CoA + AMP + diphosphate. Its function is as follows. Catalyzes the conversion of acetate into acetyl-CoA (AcCoA), an essential intermediate at the junction of anabolic and catabolic pathways. AcsA undergoes a two-step reaction. In the first half reaction, AcsA combines acetate with ATP to form acetyl-adenylate (AcAMP) intermediate. In the second half reaction, it can then transfer the acetyl group from AcAMP to the sulfhydryl group of CoA, forming the product AcCoA. In Rhizobium rhizogenes (strain K84 / ATCC BAA-868) (Agrobacterium radiobacter), this protein is Acetyl-coenzyme A synthetase.